The chain runs to 727 residues: Bromodomain-containing protein C631.02 (727 aa).

Disordered stretches follow at residues 27–231 (AATI…PPMT) and 341–369 (TSYSRPGRRPRSMTAPKGGARTRRQAAMY). Residues 56–68 (ENDDGTLDLFGDS) are compositionally biased toward acidic residues. The segment covering 69-78 (ELEKEQKGDN) has biased composition (basic and acidic residues). Polar residues predominate over residues 102-114 (PSSPTHPSVSNIT). A compositionally biased stretch (basic and acidic residues) spans 128–150 (EEEKSSESLDSHTHPPKRVRNED). Polar residues predominate over residues 153 to 177 (LTFSKTSPVSPSSLKDGASNTVTND). Position 162 is a phosphoserine (serine 162). Over residues 206–231 (SKEHSSPHDETVKKEENDKDQYPPMT) the composition is skewed to basic and acidic residues. The Bromo 1 domain occupies 229-335 (PMTKEQHKYI…ATFERQLKQL (107 aa)). The Bromo 2 domain maps to 388 to 497 (RKDAAEMKFC…SIFQKLWANK (110 aa)). The 81-residue stretch at 570-650 (RSLSVDIYPP…KGDEIGAEAL (81 aa)) folds into the NET domain. The disordered stretch occupies residues 699–727 (IAAYNTKSLGSDDSSSEDDGESSESSDSA). The span at 712-727 (SSSEDDGESSESSDSA) shows a compositional bias: acidic residues.

This sequence belongs to the BET family.

It localises to the nucleus. The chain is Bromodomain-containing protein C631.02 from Schizosaccharomyces pombe (strain 972 / ATCC 24843) (Fission yeast).